Here is a 5588-residue protein sequence, read N- to C-terminus: Histone-lysine N-methyltransferase 2D (5588 aa).

The tract at residues 1–61 (MDSQKPPAED…QKPPHDCSRG (61 aa)) is disordered. The C2HC pre-PHD-type 1; degenerate zinc-finger motif lies at 104–149 (GPCEAVLPKEDASQIGFPEGLTPAHLGEPGGHCWAHHWCAAWSAGV). 2 PHD-type zinc fingers span residues 170–218 (QRCS…PEHS) and 270–323 (CPEC…CRLC). The PHD-type 2; degenerate zinc finger occupies 226 to 276 (EARCAVCEGPGQLCDLLFCTSCGHHYHGACLDTALTARKRASWQCPECKVC). Residues 229–274 (CAVCEGPGQLCDLLFCTSCGHHYHGACLDTALTARKRASWQCPECK) form an RING-type 1; atypical zinc finger. The segment at 276 to 321 (CQSCRKPGNDSKMLVCETCDKGYHTFCLKPPMEDLPAHSWKCKTCR) adopts an RING-type 2; degenerate zinc-finger fold. Disordered stretches follow at residues 438-908 (MPLL…SPII) and 922-1315 (LEYP…DDDT). Positions 439–642 (PLLPPPEESP…VSRLSPPPEE (204 aa)) are 15 X 5 AA repeats of S/P-P-P-E/P-E/A. The span at 440–463 (LLPPPEESPLSPPPEESPTSPPPE) shows a compositional bias: pro residues. 4 repeat units span residues 442–446 (PPPEE), 460–464 (PPPEA), 469–473 (PPTEE), and 477–481 (SPPPE). The span at 464–475 (ASRLSPPTEESP) shows a compositional bias: low complexity. Composition is skewed to pro residues over residues 490–512 (GCPP…PLSP) and 519–560 (LSPP…PPPE). Repeat copies occupy residues 520–524 (SPPPE), 529–533 (SPPPE), 538–542 (SPPPE), and 547–551 (SPPPE). Over residues 561–572 (ASRLFPPFEESP) the composition is skewed to low complexity. Residues 573–614 (LSPPPEDSPLSPPPEASRLSPPPEDSPMSPPPEDSPMSPPPE) show a composition bias toward pro residues. Repeat copies occupy residues 574–578 (SPPPE), 583–587 (SPPPE), 592–596 (SPPPE), and 610–614 (SPPPE). Positions 619-636 (LPLPVLSHLSPLPEVSRL) are enriched in low complexity. Residues 637-641 (SPPPE) form repeat 15. A compositionally biased stretch (pro residues) spans 637 to 677 (SPPPEESPLSPPPEDSPASPPPEASRLSPPPEDSPASPPPE). The segment covering 696-712 (DSLVSLPMEESPLSPLP) has biased composition (low complexity). A Phosphoserine modification is found at Ser727. Composition is skewed to low complexity over residues 735 to 755 (LCPQ…CLSP), 836 to 851 (PSQS…FSPS), and 876 to 893 (LPEE…LSPQ). Pro residues-rich tracts occupy residues 894–908 (LMPP…SPII), 959–973 (EPVP…PGSP), and 985–1012 (LPPP…PPAL). Over residues 1013-1023 (PLSVPSPLSPV) the composition is skewed to low complexity. Over residues 1033-1045 (AELHEMETDKGPE) the composition is skewed to basic and acidic residues. 3 consecutive PHD-type zinc fingers follow at residues 1071-1124 (PSPA…PMEV), 1121-1171 (PMEV…SQGD), and 1198-1253 (LGVS…SPAR). Position 1107 is a phosphoserine (Ser1107). Polar residues predominate over residues 1163-1172 (EISNLSQGDA). The RING-type 3; atypical zinc-finger motif lies at 1201 to 1251 (STDVSPARDEGSLRLCTDSLPETDDSLLCDTGTATSGGKAEGDKGRRRSSP). The residue at position 1205 (Ser1205) is a Phosphoserine. Thr1223 carries the post-translational modification Phosphothreonine. Phosphoserine is present on Ser1226. The span at 1245–1258 (GRRRSSPARSRIKQ) shows a compositional bias: basic residues. Ser1562 carries the post-translational modification Phosphoserine. Disordered stretches follow at residues 1566 to 1721 (KRRQ…SKLE), 1751 to 1846 (GRPG…MESK), 1886 to 1962 (GLAL…SLQR), and 2095 to 2641 (SADG…QRQR). Over residues 1593–1608 (PDDKKDGDLDTDDLLK) the composition is skewed to basic and acidic residues. At Ser1627 the chain carries Phosphoserine. The segment covering 1631 to 1641 (ELGKEETEESK) has biased composition (basic and acidic residues). Basic residues-rich tracts occupy residues 1658-1668 (RQRKSHTRVKR) and 1709-1718 (KQQRRARKKS). The segment covering 1762–1782 (PRADGGSDRKELMTAMHKGDD) has biased composition (basic and acidic residues). Ser1791 bears the Phosphoserine mark. The residue at position 1822 (Thr1822) is a Phosphothreonine. Residues 1831-1846 (DLDRIPTEELPKMESK) are compositionally biased toward basic and acidic residues. Low complexity-rich tracts occupy residues 1886–1896 (GLALGSLPSSS) and 1936–1947 (TTPSTPTTPTTE). Residues 2151–2166 (PTYPPYPSPTGAPAQP) show a composition bias toward pro residues. Positions 2170 to 2181 (GTTTRPGTGQPG) are enriched in low complexity. The residue at position 2196 (Ser2196) is a Phosphoserine. Phosphothreonine is present on Thr2197. Lys2203 carries the post-translational modification N6-acetyllysine. 2 positions are modified to phosphoserine: Ser2217 and Ser2231. Residues 2237-2249 (ESRKSLEVKKEEL) are compositionally biased toward basic and acidic residues. Phosphoserine is present on residues Ser2266, Ser2268, and Ser2299. Composition is skewed to pro residues over residues 2308 to 2322 (EPPP…PPSH) and 2331 to 2359 (YPDP…PPRS). A compositionally biased stretch (low complexity) spans 2366–2388 (SRVPASPQSQSSSQSPLTPRPLS). Polar residues predominate over residues 2470-2486 (GQPTNFARSPGTGTFVG). The residue at position 2492 (Arg2492) is an Asymmetric dimethylarginine. Residues 2504–2514 (LKPPVPQPGLP) show a composition bias toward pro residues. A compositionally biased stretch (low complexity) spans 2546-2557 (PSGSPLGPNSGP). Position 2597 is a phosphoserine (Ser2597). Residues 2610–2622 (SSSSLATPELSSA) are compositionally biased toward low complexity. Positions 2627–2665 (ISSLSQTELEKQRQRQRLRELLIRQQIQRNTLRQEKETA) form a coiled coil. The LXXLL motif 1 motif lies at 2644-2648 (LRELL). The segment at 2655–2806 (RNTLRQEKET…QLWQQQQQQQ (152 aa)) is disordered. Over residues 2665 to 2680 (AAAAAGAVGPPGNWGA) the composition is skewed to low complexity. Polar residues-rich tracts occupy residues 2691–2704 (SRGQ…QDRS) and 2739–2748 (PSSMDMNSRQ). Residues 2768–2813 (LQQQQQQQQQQQQQQQQQQQQQQQQQQQQQLWQQQQQQQQQQQQQA) adopt a coiled-coil conformation. The span at 2769–2806 (QQQQQQQQQQQQQQQQQQQQQQQQQQQQQLWQQQQQQQ) shows a compositional bias: low complexity. Asymmetric dimethylarginine is present on Arg2829. The short motif at 3030–3034 (LDDLL) is the LXXLL motif 2 element. The interval 3069 to 3104 (NEKAEREALLRGVEPVSLGPEERPPPAPDNSEPRLT) is disordered. Lys3071 carries the N6-acetyllysine modification. Phosphoserine occurs at positions 3122 and 3193. Disordered stretches follow at residues 3129-3193 (NTPK…LNPS) and 3271-3326 (QQQQ…QSMV). The segment covering 3271 to 3284 (QQQQQQQQQQQQQQ) has biased composition (low complexity). An N6-acetyllysine modification is found at Lys3430. Disordered regions lie at residues 3460–3496 (SGGS…TFAQ), 3593–3617 (RNKQ…VLAV), 3633–3661 (LLPA…GGMV), and 3678–3704 (QQQQ…NLAL). Residues 3559–3613 (EKLKLVTEQQSKIQKQLDQVRKQQKEHTNLMAEYRNKQQQQQQQQQQQQQQQHSA) are a coiled coil. Over residues 3596-3610 (QQQQQQQQQQQQQQQ) the composition is skewed to low complexity. Residues 3712–3747 (RLLQERQLQLQQQRMQLAQKLQQQQQQQQQQQQQQH) are a coiled coil. The residue at position 3725 (Arg3725) is an Asymmetric dimethylarginine. 2 disordered regions span residues 3760-3780 (PGVQ…PSNH) and 3808-3827 (LQQQ…QGPH). 2 coiled-coil regions span residues 3854 to 3883 (RLLT…QQQQ) and 3912 to 4052 (SLQQ…QVTL). The disordered stretch occupies residues 4053–4249 (GPGLPVKPLQ…QGPPGAGVMP (197 aa)). Composition is skewed to low complexity over residues 4128–4159 (SQLL…PQPQ), 4172–4183 (GQQLGSGSSSES), and 4226–4240 (GSQP…QSGQ). An Asymmetric dimethylarginine modification is found at Arg4255. Ser4272 is modified (phosphoserine). An LXXLL motif 3 motif is present at residues 4279–4283 (LQALL). Positions 4290-4452 (QSQAVRQTPP…SSLVPGHLDQ (163 aa)) are disordered. Residues 4294 to 4305 (VRQTPPFQEPGT) are compositionally biased toward polar residues. Residues 4307–4322 (PSPLQGLLGCQPQPGG) show a composition bias toward low complexity. The short motif at 4310–4314 (LQGLL) is the LXXLL motif 4 element. Positions 4379 to 4391 (QLPSPSAQLTPTH) are enriched in polar residues. Residue Ser4410 is modified to Phosphoserine. Polar residues predominate over residues 4432 to 4445 (DNLTEAQKPEQSSL). Positions 4514 to 4518 (LQKLL) match the LXXLL motif 5 motif. At Lys4516 the chain carries N6-acetyllysine. 3 disordered regions span residues 4553-4596 (LQGT…EDGV), 4664-4716 (KNNL…EGAL), and 4729-4778 (AALP…QLGS). Residues 4670–4684 (PPTPPSSLPPTPPPS) are compositionally biased toward pro residues. Position 4789 is a phosphoserine (Ser4789). Residue Lys4807 forms a Glycyl lysine isopeptide (Lys-Gly) (interchain with G-Cter in SUMO2) linkage. Lys4827 bears the N6-acetyllysine mark. An RING-type 4; degenerate zinc finger spans residues 4829–4874 (KGSEVSVMLTVSAAAAKNLNGVMVAVAELLSMKIPNSYEVLFPDGP). The interval 4877-4908 (AGLEPKKGEAEGPGGKEKGLSGKGPDTGPDWL) is disordered. Positions 4879 to 4896 (LEPKKGEAEGPGGKEKGL) are enriched in basic and acidic residues. A Glycyl lysine isopeptide (Lys-Gly) (interchain with G-Cter in SUMO2) cross-link involves residue Lys4931. The tract at residues 4956–5031 (QLSAPPPEEP…SEDSRPPRLK (76 aa)) is disordered. The span at 4959–4982 (APPPEEPSPPPSPLAPSPASPPAE) shows a compositional bias: pro residues. The segment covering 5017-5027 (RPPEESEDSRP) has biased composition (basic and acidic residues). The LXXLL motif 6 motif lies at 5041–5045 (LRLLL). The segment at 5080–5120 (NRRCCFCHEEGDGATDGPARLLNLDLDLWVHLNCALWSTEV) adopts a C2HC pre-PHD-type 2 zinc-finger fold. A PHD-type 7 zinc finger spans residues 5141 to 5188 (TKCSLCQRTGATSSCNRMRCPNVYHFACAIRAKCMFFKDKTMLCPVHK). An FYR N-terminal domain is found at 5226-5286 (LHMFRVGGLV…CCYRCSISEN (61 aa)). Residues 5287–5372 (NGRPEFVIKV…ESCQNYLFRY (86 aa)) enclose the FYR C-terminal domain. Positions 5388–5393 (GCARSE) match the WDR5 interaction motif (WIN) motif. The SET domain occupies 5448–5564 (NNVYLARSRI…KGEELTYDYQ (117 aa)). S-adenosyl-L-methionine-binding positions include Tyr5502 and 5525-5526 (NH). Zn(2+)-binding residues include Cys5528, Cys5576, Cys5578, and Cys5583. Positions 5572 to 5588 (HKIPCHCGAWNCRKWMN) constitute a Post-SET domain.

This sequence belongs to the class V-like SAM-binding methyltransferase superfamily. Histone-lysine methyltransferase family. TRX/MLL subfamily. In terms of assembly, component of the MLL2 complex (also named ASCOM complex), at least composed of catalytic subunit KMT2D/MLL2, ASH2L, RBBP5, WDR5, NCOA6, DPY30, KDM6A, PAXIP1/PTIP, PAGR1 and alpha- and beta-tubulin. Forms a core complex with the evolutionary conserved subcomplex WRAD composed of WDR5, RBBP5, ASH2L/ASH2 and DPY30 subunits; WRAD differentially stimulates the methyltransferase activity. Interacts with ESR1; interaction is direct. Interacts (via WIN motif) with WDR5.

It localises to the nucleus. It catalyses the reaction L-lysyl(4)-[histone H3] + S-adenosyl-L-methionine = N(6)-methyl-L-lysyl(4)-[histone H3] + S-adenosyl-L-homocysteine + H(+). Its function is as follows. Histone methyltransferase that catalyzes methyl group transfer from S-adenosyl-L-methionine to the epsilon-amino group of 'Lys-4' of histone H3 (H3K4). Part of chromatin remodeling machinery predominantly forms H3K4me1 methylation marks at active chromatin sites where transcription and DNA repair take place. Acts as a coactivator for estrogen receptor by being recruited by ESR1, thereby activating transcription. This is Histone-lysine N-methyltransferase 2D (Kmt2d) from Mus musculus (Mouse).